Consider the following 305-residue polypeptide: MNDLISSSFKRYTDLNHQVQLDDIESQNVSLDSGNLDEFFGYVESVKEDMKAVDEIHKRLQDANEESKTVHDSKAVKKLRARMDSSVTEVLKRVKMIKTKLVALEKSNAAQRKVAGCGPGSSADRTRTSVVSGLGKKLKDMMDDFQRLRTKMATEYKETVERRYFTVTGQKADEETVEKLISSGESERFLQKAIQEQGRGQVMDTLSEIQERHDTVKEIERSLLELHQVFLDMAALVEAQGNMLNDIESNVSKASSFVMRGTDQLHGAKVLQRNNRKWACIATILAIVVVIVILFPILFNTLLRP.

Position 1 is an N-acetylmethionine (Met-1). The Cytoplasmic segment spans residues 1–278 (MNDLISSSFK…KVLQRNNRKW (278 aa)). Residues 46–66 (VKEDMKAVDEIHKRLQDANEE) adopt a coiled-coil conformation. The t-SNARE coiled-coil homology domain occupies 206–268 (LSEIQERHDT…MRGTDQLHGA (63 aa)). A helical; Anchor for type IV membrane protein transmembrane segment spans residues 279 to 299 (ACIATILAIVVVIVILFPILF). At 300 to 305 (NTLLRP) the chain is on the vesicular side.

Belongs to the syntaxin family. Part of the t-SNARE complex. Expressed in tips of root hairs.

It is found in the membrane. In terms of biological role, vesicle trafficking protein that functions in the secretory pathway. Acts in coordination with SYP132 to mediate tip-focused membrane trafficking for root hair tip growth. Functions in root hair elongation by forming SNARE complexes with VAMP721,VAMP722 or VAMP724. In Arabidopsis thaliana (Mouse-ear cress), this protein is Syntaxin-123.